Consider the following 451-residue polypeptide: Tetraspanin-14 (451 aa).

Topologically, residues 1–56 (MPHRAPRRFMKTAPGACDWEQCLLMGSGEPTRARAVVSSSHKQRKPRQEISACLKW) are cytoplasmic. Positions 20-24 (EQCLL) match the Basolateral membrane targeting motif. Residues 57–77 (LVFLLNSIVFLVGVGILALGV) traverse the membrane as a helical segment. Topologically, residues 78–96 (YLFIKDFREVKLVDIILNP) are extracellular. A helical transmembrane segment spans residues 97 to 117 (AILISIFGFSICVVSFFGFMG). The Cytoplasmic segment spans residues 118-130 (ALRDNIFLLKCFA). A helical transmembrane segment spans residues 131–151 (ACVFLSYILVVAVTLVFFTLF). Residues 152-285 (YTDTTEGLSA…QPLRTLFESH (134 aa)) lie on the Extracellular side of the membrane. 2 N-linked (GlcNAc...) asparagine glycosylation sites follow: Asn205 and Asn211. The chain crosses the membrane as a helical span at residues 286–306 (AVHVGAFVALLIVPVCISVCL). Residues 307 to 451 (TNILAKQVDH…TDLVPQKSKS (145 aa)) are Cytoplasmic-facing. Residues 328–451 (NDRRRKRDHN…TDLVPQKSKS (124 aa)) are disordered. Positions 366–376 (PDIPPPLPPIE) are enriched in pro residues. The span at 410–434 (ATTTRTPPAAAGPAPTPQATTTNRT) shows a compositional bias: low complexity. The span at 435–444 (HQWVLQQTDL) shows a compositional bias: polar residues.

It belongs to the tetraspanin (TM4SF) family. In terms of tissue distribution, expressed in the germline, particularly in sperm cells. As to expression, expressed in the germline (particularly in sperm cells), anterior sensory cilia, hypodermis and vulva (at protein level). Expressed in the pharynx, hypodermis and vulva (at protein level).

Its subcellular location is the cell membrane. The protein localises to the cytoplasmic vesicle membrane. It localises to the endosome membrane. It is found in the early endosome membrane. The protein resides in the late endosome membrane. Its subcellular location is the recycling endosome membrane. The protein localises to the apical cell membrane. It localises to the basolateral cell membrane. Its function is as follows. Functions redundantly with tsp-12 to regulate cell surface levels of the BMP type II receptor daf-4 (but not BMP type I receptor sma-6), probably by regulating endosomal sorting and recycling of receptors, preventing their targeting to degradative lysosomes. Together with tsp-12, regulates cell fate specification in the postembryonic mesodermal M lineage, body size, male development and vulva development, probably by positively modulating BMP-like Sma/Mab signaling. Together with tsp-12 involved in maintaining the structural and functional integrity of the endosomal network. Together with tsp-12, probably acts by modulating the activation of glp-1, Notch-like receptor, to regulate germline maturation. Functions redundantly with tsp-12 to regulate cell fate specification in the postembryonic mesodermal M lineage, body size, embryonic and vulva development. In terms of biological role, functions redundantly with tsp-12 to regulate cell fate specification in the postembryonic mesodermal M lineage. Likely plays a complementary role in mesodermal development with tsp-14 isoform a, but may be more critical. In Caenorhabditis elegans, this protein is Tetraspanin-14.